Reading from the N-terminus, the 260-residue chain is Aspartate/glutamate leucyltransferase (260 aa).

The protein belongs to the R-transferase family. Bpt subfamily.

The protein localises to the cytoplasm. It catalyses the reaction N-terminal L-glutamyl-[protein] + L-leucyl-tRNA(Leu) = N-terminal L-leucyl-L-glutamyl-[protein] + tRNA(Leu) + H(+). The enzyme catalyses N-terminal L-aspartyl-[protein] + L-leucyl-tRNA(Leu) = N-terminal L-leucyl-L-aspartyl-[protein] + tRNA(Leu) + H(+). Functions in the N-end rule pathway of protein degradation where it conjugates Leu from its aminoacyl-tRNA to the N-termini of proteins containing an N-terminal aspartate or glutamate. The sequence is that of Aspartate/glutamate leucyltransferase from Sphingomonas elodea.